The sequence spans 205 residues: Probable anaerobic dimethyl sulfoxide reductase chain YnfG (205 aa).

4Fe-4S ferredoxin-type domains lie at 5–33 (YGFF…LGPE), 59–89 (FAYY…KRED), and 90–119 (GFVV…YNAE). 16 residues coordinate [4Fe-4S] cluster: Cys14, Cys17, Cys20, Cys24, Cys67, Cys70, Cys75, Cys79, Cys99, Cys102, Cys105, Cys109, Cys126, Cys129, Cys141, and Cys145. Positions 183–205 (IKPNANSRPTGDTTGYLANPEEV) are disordered. Residues 186-195 (NANSRPTGDT) show a composition bias toward polar residues.

The complex consists of three subunits: YnfF, the reductase; YnfG, an electron transfer protein, and YnfH, a membrane anchor protein. [4Fe-4S] cluster is required as a cofactor.

Functionally, electron transfer subunit of the terminal reductase during anaerobic growth on various sulfoxide and N-oxide compounds. The sequence is that of Probable anaerobic dimethyl sulfoxide reductase chain YnfG (ynfG) from Escherichia coli O6:H1 (strain CFT073 / ATCC 700928 / UPEC).